The primary structure comprises 318 residues: Pyrimidine-specific ribonucleoside hydrolase RihA (318 aa).

The active site involves histidine 240.

Belongs to the IUNH family. RihA subfamily.

Functionally, hydrolyzes cytidine or uridine to ribose and cytosine or uracil, respectively. This chain is Pyrimidine-specific ribonucleoside hydrolase RihA, found in Shewanella baltica (strain OS155 / ATCC BAA-1091).